Consider the following 226-residue polypeptide: UPF0758 protein M28_Spy0816 (226 aa).

An MPN domain is found at 103–225 (SVLTSVQVAE…YYSFREKSTL (123 aa)). Zn(2+)-binding residues include H174, H176, and D187. The JAMM motif signature appears at 174–187 (HNHPSGNIEPSSND).

This sequence belongs to the UPF0758 family.

In Streptococcus pyogenes serotype M28 (strain MGAS6180), this protein is UPF0758 protein M28_Spy0816.